The sequence spans 145 residues: Cell division protein SepF (145 aa).

Residues 23 to 41 (PQEVSKTKDENAKPKHETP) are compositionally biased toward basic and acidic residues. The disordered stretch occupies residues 23-42 (PQEVSKTKDENAKPKHETPK).

It belongs to the SepF family. In terms of assembly, homodimer. Interacts with FtsZ.

It localises to the cytoplasm. Its function is as follows. Cell division protein that is part of the divisome complex and is recruited early to the Z-ring. Probably stimulates Z-ring formation, perhaps through the cross-linking of FtsZ protofilaments. Its function overlaps with FtsA. The chain is Cell division protein SepF from Caldicellulosiruptor bescii (strain ATCC BAA-1888 / DSM 6725 / KCTC 15123 / Z-1320) (Anaerocellum thermophilum).